Consider the following 382-residue polypeptide: Transforming growth factor beta-1 proprotein (382 aa).

The signal sequence occupies residues 1-20 (MRAVCLMLTALLMLEYVCRS). The straightjacket domain stretch occupies residues 23–68 (MSTCKSLDLELVKRKRIEAIRGQILSKLRLPKEPEIDQEGDTEEVP). The interval 69-264 (ASLMSIYNST…SLPVERHSQL (196 aa)) is arm domain. Asparagine 76, asparagine 116, and asparagine 125 each carry an N-linked (GlcNAc...) asparagine glycan. Residues 218 to 243 (GKPMEEFRFKISGMNKLRGNTETLAM) are bowtie tail. The Cell attachment site motif lies at 235-237 (RGN). Cystine bridges form between cysteine 278-cysteine 286, cysteine 285-cysteine 348, cysteine 314-cysteine 379, and cysteine 318-cysteine 381.

The protein belongs to the TGF-beta family. Latency-associated peptide: Homodimer; disulfide-linked. Latency-associated peptide: Interacts with Transforming growth factor beta-1 (TGF-beta-1) chain; interaction is non-covalent and maintains (TGF-beta-1) in a latent state; each Latency-associated peptide (LAP) monomer interacts with TGF-beta-1 in the other monomer. Transforming growth factor beta-1: Homodimer; disulfide-linked. Transforming growth factor beta-1: Interacts with TGF-beta receptors (tgfbr1 and tgfbr2), leading to signal transduction. Interacts with EFEMP2. In terms of processing, transforming growth factor beta-1 proprotein: The precursor proprotein is cleaved in the Golgi apparatus to form Transforming growth factor beta-1 (TGF-beta-1) and Latency-associated peptide (LAP) chains, which remain non-covalently linked, rendering TGF-beta-1 inactive. Expressed in blood leukocytes, kidney macrophages, brain, gill and spleen but not in liver.

The protein resides in the secreted. It is found in the extracellular space. It localises to the extracellular matrix. In terms of biological role, transforming growth factor beta-1 proprotein: Precursor of the Latency-associated peptide (LAP) and Transforming growth factor beta-1 (TGF-beta-1) chains, which constitute the regulatory and active subunit of TGF-beta-1, respectively. Functionally, required to maintain the Transforming growth factor beta-1 (TGF-beta-1) chain in a latent state during storage in extracellular matrix. Associates non-covalently with TGF-beta-1 and regulates its activation via interaction with 'milieu molecules', such as LTBP1, LRRC32/GARP and LRRC33/NRROS, that control activation of TGF-beta-1. Interaction with integrins (ITGAV:ITGB6 or ITGAV:ITGB8) results in distortion of the Latency-associated peptide chain and subsequent release of the active TGF-beta-1. Transforming growth factor beta-1: Multifunctional protein that regulates the growth and differentiation of various cell types and is involved in various processes, such as normal development, immune function, microglia function and responses to neurodegeneration. Activation into mature form follows different steps: following cleavage of the proprotein in the Golgi apparatus, Latency-associated peptide (LAP) and Transforming growth factor beta-1 (TGF-beta-1) chains remain non-covalently linked rendering TGF-beta-1 inactive during storage in extracellular matrix. At the same time, LAP chain interacts with 'milieu molecules', such as ltbp1, lrrc32/garp and lrrc33/nrros that control activation of TGF-beta-1 and maintain it in a latent state during storage in extracellular milieus. TGF-beta-1 is released from LAP by integrins (ITGAV:ITGB6 or ITGAV:ITGB8): integrin-binding to LAP stabilizes an alternative conformation of the LAP bowtie tail and results in distortion of the LAP chain and subsequent release of the active TGF-beta-1. Once activated following release of LAP, TGF-beta-1 acts by binding to TGF-beta receptors (tgfbr1 and tgfbr2), which transduce signal. While expressed by many cells types, TGF-beta-1 only has a very localized range of action within cell environment thanks to fine regulation of its activation by Latency-associated peptide chain (LAP) and 'milieu molecules'. Plays an important role in bone remodeling: acts as a potent stimulator of osteoblastic bone formation. Can promote either T-helper 17 cells (Th17) or regulatory T-cells (Treg) lineage differentiation in a concentration-dependent manner. Can induce epithelial-to-mesenchymal transition (EMT) and cell migration in various cell types. The chain is Transforming growth factor beta-1 proprotein (tgfb1) from Oncorhynchus mykiss (Rainbow trout).